Consider the following 197-residue polypeptide: Phosphoheptose isomerase (197 aa).

The SIS domain occupies 40–197 (CIASIAQGGK…LVEHSIFGKQ (158 aa)). 55 to 57 (NGG) lines the substrate pocket. Zn(2+)-binding residues include H64 and E68. Substrate-binding positions include E68, 97 to 98 (ND), 123 to 125 (STS), S128, and Q175. Zn(2+) is bound by residues Q175 and H183.

The protein belongs to the SIS family. GmhA subfamily. Homotetramer. The cofactor is Zn(2+).

It localises to the cytoplasm. The enzyme catalyses 2 D-sedoheptulose 7-phosphate = D-glycero-alpha-D-manno-heptose 7-phosphate + D-glycero-beta-D-manno-heptose 7-phosphate. It participates in carbohydrate biosynthesis; D-glycero-D-manno-heptose 7-phosphate biosynthesis; D-glycero-alpha-D-manno-heptose 7-phosphate and D-glycero-beta-D-manno-heptose 7-phosphate from sedoheptulose 7-phosphate: step 1/1. It functions in the pathway capsule biogenesis; capsule polysaccharide biosynthesis. Its function is as follows. Catalyzes the isomerization of sedoheptulose 7-phosphate in D-glycero-D-manno-heptose 7-phosphate. This Burkholderia mallei (strain ATCC 23344) protein is Phosphoheptose isomerase.